The chain runs to 258 residues: Lysine-rich coiled-coil protein 1 (258 aa).

Positions 142 to 258 (DNSTSTHQAS…MLWDQSILGF (117 aa)) are disordered. Basic residues predominate over residues 150–161 (ASHKQIHQKRKR). Basic and acidic residues-rich tracts occupy residues 162 to 175 (HPEE…EEWS), 183 to 213 (CKEI…TEKL), and 220 to 232 (KGRD…EERK). The stretch at 211–248 (EKLKNRKEKKGRDVVSKKEERKRTKKKKEQGQERTEEE) forms a coiled coil.

In Pongo abelii (Sumatran orangutan), this protein is Lysine-rich coiled-coil protein 1 (KRCC1).